Consider the following 314-residue polypeptide: Transcription factor SOX-12 (314 aa).

Disordered regions lie at residues 1–40 (MVQQ…SGHI) and 101–287 (MADY…FEFP). A DNA-binding region (HMG box) is located at residues 40 to 108 (IKRPMNAFMV…KHMADYPDYK (69 aa)). The segment covering 149–159 (RASGGPLGGGA) has biased composition (gly residues). The segment covering 162–173 (PEDDDEDEEEEL) has biased composition (acidic residues). Residues 174–187 (LEVRLLETPGRELW) are compositionally biased toward basic and acidic residues. Positions 191 to 217 (PAGRAARGPAERAQGPSGEGAAASAAS) are enriched in low complexity. Positions 221-243 (SEDEEPEEEEEEAATAEEGEEET) are enriched in acidic residues. A required for transcriptional activation activity and synergistic coactivation of transcriptional activity with POU3F2 region spans residues 282 to 314 (SHFEFPDYCTPEVTEMIAGDWRSSSIADLVFTY).

In terms of tissue distribution, expressed in splenic and thymic regulatory T-cells (at protein level). Expressed in embryonic molar and incisor teeth.

It localises to the nucleus. In terms of biological role, transcription factor that binds to DNA at the consensus sequence 5'-ACCAAAG-3'. Acts as a transcriptional activator. Binds cooperatively with POU3F2/BRN2 or POU3F1/OCT6 to gene promoters, which enhances transcriptional activation. Involved in the differentiation of naive CD4-positive T-cells into peripherally induced regulatory T (pT reg) cells under inflammatory conditions. Binds to the promoter region of the FOXP3 gene and promotes its transcription, and might thereby contribute to pT reg cell differentiation in the spleen and lymph nodes during inflammation. Plays a redundant role with SOX4 and SOX11 in cell survival of developing tissues such as the neural tube, branchial arches and somites, thereby contributing to organogenesis. The chain is Transcription factor SOX-12 (Sox12) from Mus musculus (Mouse).